Here is a 160-residue protein sequence, read N- to C-terminus: Large ribosomal subunit protein uL22c (160 aa).

It belongs to the universal ribosomal protein uL22 family. As to quaternary structure, part of the 50S ribosomal subunit.

It localises to the plastid. The protein localises to the chloroplast. This protein binds specifically to 23S rRNA. In terms of biological role, the globular domain of the protein is located near the polypeptide exit tunnel on the outside of the subunit, while an extended beta-hairpin is found that lines the wall of the exit tunnel in the center of the 70S ribosome. In Arabidopsis thaliana (Mouse-ear cress), this protein is Large ribosomal subunit protein uL22c (rpl22).